The sequence spans 735 residues: Transcription factor RFX4 (735 aa).

The tract at residues 25 to 59 is disordered; the sequence is SESKRFSSHSSIGNISNDENEEKENNRASKPHSTP. Residues 44 to 126 mediate DNA binding; that stretch reads NEEKENNRAS…RRLGTRGQSK (83 aa). The segment at residues 61–136 is a DNA-binding region (RFX-type winged-helix); sequence TLQWLEENYE…YHYYGIAVKE (76 aa). Residues 315 to 487 form a necessary for dimerization region; that stretch reads RFSQILKRQT…NELMRAMKGE (173 aa).

This sequence belongs to the RFX family.

The protein localises to the nucleus. Functionally, may activate transcription by interacting directly with the X-box. This is Transcription factor RFX4 (rfx4) from Danio rerio (Zebrafish).